The sequence spans 286 residues: MHVDIVSIFPEYFRPLELSLIGKARARGVLDVHLWDLRDFTHDPHRTVDDTPYGGGPGMVMRPEPWGETLDAVRAEAARLGVDAPLLIVPTPAGELLTQRAAERYAAEPWLAFACGRYEGIDERVLLDARRHMRVEEVSIGDYVLAGGEAATLVIVEAVARLLPGVVGNQASVLDDSHAQGLLEGPAYTKPAVWRGLEVPEVLLSGNHAAIARWRREQAIRRTAVRRPELLDALPPGSLTPHEEALAAEARLHAGRSAETPPPAGAAGSQAEGPPGTSPSDAAVAH.

S-adenosyl-L-methionine-binding positions include glycine 116 and 140–145; that span reads IGDYVL. A disordered region spans residues 232-286; the sequence is DALPPGSLTPHEEALAAEARLHAGRSAETPPPAGAAGSQAEGPPGTSPSDAAVAH.

It belongs to the RNA methyltransferase TrmD family. Homodimer.

It localises to the cytoplasm. The catalysed reaction is guanosine(37) in tRNA + S-adenosyl-L-methionine = N(1)-methylguanosine(37) in tRNA + S-adenosyl-L-homocysteine + H(+). Functionally, specifically methylates guanosine-37 in various tRNAs. The protein is tRNA (guanine-N(1)-)-methyltransferase of Acidothermus cellulolyticus (strain ATCC 43068 / DSM 8971 / 11B).